The sequence spans 1009 residues: Epstein-Barr nuclear antigen 6 (1009 aa).

Disordered stretches follow at residues 1–70 (MESF…RGWM), 356–504 (TVGE…GACV), 516–646 (VETT…PRPS), 663–922 (QPIQ…DSMA), 948–971 (PLDI…PARC), and 984–1009 (DNSE…SELD). Basic and acidic residues predominate over residues 12–31 (QSPDNERGDNVQTTGEHDQD). The span at 381–391 (VELESSDDELP) shows a compositional bias: acidic residues. Residues 445–461 (AQSTPERPGPSEQSSVT) are compositionally biased toward polar residues. Composition is skewed to pro residues over residues 479-495 (QPPP…TPPP) and 563-574 (AAGPPAAGPPAA). 2 stretches are compositionally biased toward polar residues: residues 622–641 (EITQ…TQPT) and 664–679 (PIQS…TQPI). The span at 680 to 689 (SHEEQPRYED) shows a compositional bias: basic and acidic residues. Low complexity-rich tracts occupy residues 710–769 (APYQ…GYQE) and 776–798 (PYQG…EPPA). A compositionally biased stretch (polar residues) spans 862–874 (DQVSQFPHLQSET). Positions 876-898 (PPRLQLSSVPLVSSSAPSWSSPQ) are enriched in low complexity. Residues 899–916 (PRAPIRPIPTRFPPPPMP) are compositionally biased toward pro residues.

Belongs to the herpesviridae EBNA-6 family. As to quaternary structure, interacts with host CTPB1; this interaction leads to gene repression, but also seems to interfere with the repressive function of CtBP pre-bound to DNA, leading to EBNA6 mediated up-regulation of many host genes. Interacts with host MYC; this interaction enhances MYC stability. Interacts (via N-terminus) with host RBPJ. Interacts (via N-terminus) with host histone H2AX; this interaction facilitates H2AX proteasomal degradation. Interacts with host TP73; this interaction inhibits TP73-mediated apoptotic pathway. Interacts (via N-terminus) with host PIM1; this interaction upregulates and stabilizes PIM1 and induces cell proliferation by inhibiting the growth suppressive properties of p21.

It is found in the host nucleus. Its subcellular location is the host nucleus matrix. Its function is as follows. Plays an essential role for the activation and immortalization of human B-cells. Represses transcription of viral promoters TP1 and Cp through interaction with host RBPJ, and inhibits EBNA2-mediated activation of these promoters. Targets host chromatin through interactions with host transcription factors, especially RBPJ and IRF4. Alternatively, EBNA6 also regulates the transcription of the EBV oncogene LMP1 in a cell cycle-dependent manner. Modulates the activity of several host proteins involved in cell cycle regulation including host cyclin A, MYC, RB, p21 and p27 mainly through binding to the host SCF(SKP2) complex. Inhibits the promoter of host H2AX and targets H2AX to proteasomal degradation in order to promote latency and cell proliferation. Upregulates host PIM1 expression and stabilization. Potentiates PIM1 to promote cell proliferation by inhibiting the growth suppressive properties of p21. This Epstein-Barr virus (strain GD1) (HHV-4) protein is Epstein-Barr nuclear antigen 6 (EBNA6).